The following is a 491-amino-acid chain: Rab5 GDP/GTP exchange factor (491 aa).

Residues 1 to 74 (MSLKSERRGI…EEEAFASSQS (74 aa)) form an interaction with ubiquitinated proteins region. The A20-type zinc finger occupies 13 to 47 (DQSDLLCKKGCGYYGNPAWQGFCSKCWREEYHKAR). The Zn(2+) site is built by C19, C23, C35, and C38. The interval 66 to 85 (EEAFASSQSSQGAQSLTFSK) is disordered. A compositionally biased stretch (low complexity) spans 69 to 84 (FASSQSSQGAQSLTFS). A phosphoserine mark is found at S124 and S132. N6-acetyllysine occurs at positions 151 and 170. Residues 232–375 (EKKDLAIQKR…IEKLDAQSLN (144 aa)) enclose the VPS9 domain. S373, S377, S390, and S400 each carry phosphoserine. A disordered region spans residues 462 to 491 (PPNQPLAAIDSENVENDKLPPPLQPQVYAG).

As to quaternary structure, interacts with RGS14; the interaction is GTP-dependent. Heterodimer with RABEP1. The heterodimer binds RAB4A and RAB5A that have been activated by GTP-binding. Interacts with RAB21, and with 100-fold lower affinity also with RAB22. Binds TSC2, GGA1, GGA2, GGA3, AP1G1 and AP1G2. Interacts with ubiquitinated EGFR. Monoubiquitinated.

Its subcellular location is the cytoplasm. The protein resides in the early endosome. The protein localises to the recycling endosome. In terms of biological role, rab effector protein acting as linker between gamma-adaptin, RAB4A or RAB5A. Involved in endocytic membrane fusion and membrane trafficking of recycling endosomes. Stimulates nucleotide exchange on RAB5A. Can act as a ubiquitin ligase. The protein is Rab5 GDP/GTP exchange factor (RABGEF1) of Homo sapiens (Human).